The primary structure comprises 490 residues: Cytochrome P450 2C39 (490 aa).

A signal peptide spans 1–25 (MDLVTFLVLTLSSLILLSLWRQSCG). Residue Cys-435 participates in heme binding.

This sequence belongs to the cytochrome P450 family. Heme serves as cofactor. In terms of tissue distribution, liver.

It is found in the endoplasmic reticulum membrane. The protein localises to the microsome membrane. It catalyses the reaction an organic molecule + reduced [NADPH--hemoprotein reductase] + O2 = an alcohol + oxidized [NADPH--hemoprotein reductase] + H2O + H(+). It carries out the reaction (5Z,8Z,11Z,14Z)-eicosatetraenoate + reduced [NADPH--hemoprotein reductase] + O2 = 11,12-epoxy-(5Z,8Z,14Z)-eicosatrienoate + oxidized [NADPH--hemoprotein reductase] + H2O + H(+). The catalysed reaction is (5Z,8Z,11Z,14Z)-eicosatetraenoate + reduced [NADPH--hemoprotein reductase] + O2 = 14,15-epoxy-(5Z,8Z,11Z)-eicosatrienoate + oxidized [NADPH--hemoprotein reductase] + H2O + H(+). It participates in lipid metabolism; arachidonate metabolism. In terms of biological role, a cytochrome P450 monooxygenase that primarily catalyzes the epoxidation of 11,12 and 14,15 double bonds of (5Z,8Z,11Z,14Z)-eicosatetraenoic acid (arachidonate) forming 11,12- and 14,15-epoxyeicosatrienoic acids (11,12- and 14,15-EET) regioisomers. Mechanistically, uses molecular oxygen inserting one oxygen atom into a substrate, and reducing the second into a water molecule, with two electrons provided by NADPH via cytochrome P450 reductase (CPR; NADPH--hemoprotein reductase). The sequence is that of Cytochrome P450 2C39 from Mus musculus (Mouse).